A 494-amino-acid polypeptide reads, in one-letter code: Probable serine/threonine-protein kinase BSK3 (494 aa).

Gly-2 carries the N-myristoyl glycine lipid modification. One can recognise a Protein kinase domain in the interval 61–316 (ENIVSEHGEK…SLVQALAPLQ (256 aa)). ATP contacts are provided by residues 67–75 (HGEKAPNVV) and Lys-89. The active-site Proton acceptor is the Asp-183. A phosphoserine mark is found at Ser-213 and Ser-215. The TPR repeat unit spans residues 423–456 (PTIYARRCLSYLMNDKAEQALSDAMQALVISPTW).

In terms of assembly, interacts with BRI1 and BSL1. In terms of processing, phosphorylated at Ser-213 and Ser-215 by BRI1. Phosphorylation at Ser-215 is required for its function in the regulation of brassinosteroid signaling. Phosphorylation by BRI1 disrupts the interaction between its TPR and kinase domains, thereby increasing the binding between its kinase domain and BSL1.

The protein resides in the cell membrane. It catalyses the reaction L-seryl-[protein] + ATP = O-phospho-L-seryl-[protein] + ADP + H(+). It carries out the reaction L-threonyl-[protein] + ATP = O-phospho-L-threonyl-[protein] + ADP + H(+). In terms of biological role, probable serine/threonine kinase that acts as a positive regulator of brassinosteroid (BR) signaling downstream of BRI1. This Oryza sativa subsp. japonica (Rice) protein is Probable serine/threonine-protein kinase BSK3.